The following is a 411-amino-acid chain: Dihydrofolate synthase/folylpolyglutamate synthase (411 aa).

53-56 (GKGT) contacts ATP. S77 contributes to the Mg(2+) binding site. 7,8-dihydropteroate contacts are provided by residues 116 to 119 (TYFE) and 147 to 149 (LDA). H167 is a binding site for Mg(2+). R283 and D296 together coordinate ATP.

It belongs to the folylpolyglutamate synthase family. As to quaternary structure, monomer. Mg(2+) serves as cofactor.

It carries out the reaction 7,8-dihydropteroate + L-glutamate + ATP = 7,8-dihydrofolate + ADP + phosphate + H(+). It catalyses the reaction (6S)-5,6,7,8-tetrahydrofolyl-(gamma-L-Glu)(n) + L-glutamate + ATP = (6S)-5,6,7,8-tetrahydrofolyl-(gamma-L-Glu)(n+1) + ADP + phosphate + H(+). The enzyme catalyses 10-formyltetrahydrofolyl-(gamma-L-Glu)(n) + L-glutamate + ATP = 10-formyltetrahydrofolyl-(gamma-L-Glu)(n+1) + ADP + phosphate + H(+). The catalysed reaction is (6R)-5,10-methylenetetrahydrofolyl-(gamma-L-Glu)(n) + L-glutamate + ATP = (6R)-5,10-methylenetetrahydrofolyl-(gamma-L-Glu)(n+1) + ADP + phosphate + H(+). It participates in cofactor biosynthesis; tetrahydrofolate biosynthesis; 7,8-dihydrofolate from 2-amino-4-hydroxy-6-hydroxymethyl-7,8-dihydropteridine diphosphate and 4-aminobenzoate: step 2/2. The protein operates within cofactor biosynthesis; tetrahydrofolylpolyglutamate biosynthesis. In terms of biological role, functions in two distinct reactions of the de novo folate biosynthetic pathway. Catalyzes the addition of a glutamate residue to dihydropteroate (7,8-dihydropteroate or H2Pte) to form dihydrofolate (7,8-dihydrofolate monoglutamate or H2Pte-Glu). Also catalyzes successive additions of L-glutamate to tetrahydrofolate or 10-formyltetrahydrofolate or 5,10-methylenetetrahydrofolate, leading to folylpolyglutamate derivatives. This chain is Dihydrofolate synthase/folylpolyglutamate synthase (folC), found in Buchnera aphidicola subsp. Acyrthosiphon pisum (strain APS) (Acyrthosiphon pisum symbiotic bacterium).